The sequence spans 123 residues: Large ribosomal subunit protein uL18 (123 aa).

This sequence belongs to the universal ribosomal protein uL18 family. In terms of assembly, part of the 50S ribosomal subunit; part of the 5S rRNA/L5/L18/L25 subcomplex. Contacts the 5S and 23S rRNAs.

This is one of the proteins that bind and probably mediate the attachment of the 5S RNA into the large ribosomal subunit, where it forms part of the central protuberance. This chain is Large ribosomal subunit protein uL18, found in Bifidobacterium adolescentis (strain ATCC 15703 / DSM 20083 / NCTC 11814 / E194a).